Here is a 140-residue protein sequence, read N- to C-terminus: Probable disulfide formation protein C 2 (140 aa).

Residues 6-25 (KYHIAIAWTIATSAMLISLI) traverse the membrane as a helical segment. The cysteines at positions 35 and 38 are disulfide-linked. The next 2 helical transmembrane spans lie at 40 to 59 (YQRM…MYRK) and 66 to 83 (YAFP…YQIT). Cys95 and Cys101 are joined by a disulfide. The chain crosses the membrane as a helical span at residues 110-134 (GFISIPMLSFVGFLAIIILLYINQI).

This sequence belongs to the DsbB family. BdbC subfamily.

The protein resides in the cell membrane. In terms of biological role, required for disulfide bond formation in some proteins. In Bacillus anthracis, this protein is Probable disulfide formation protein C 2 (bdbC2).